The primary structure comprises 401 residues: Argininosuccinate synthase (401 aa).

8 to 16 (AYSGGLDTS) lines the ATP pocket. Y87 is an L-citrulline binding site. G117 provides a ligand contact to ATP. Positions 119, 123, and 124 each coordinate L-aspartate. Residue N123 coordinates L-citrulline. L-citrulline is bound by residues R127, S175, E259, and Y271.

This sequence belongs to the argininosuccinate synthase family. Type 1 subfamily. As to quaternary structure, homotetramer.

It is found in the cytoplasm. The enzyme catalyses L-citrulline + L-aspartate + ATP = 2-(N(omega)-L-arginino)succinate + AMP + diphosphate + H(+). It functions in the pathway amino-acid biosynthesis; L-arginine biosynthesis; L-arginine from L-ornithine and carbamoyl phosphate: step 2/3. This chain is Argininosuccinate synthase, found in Corynebacterium efficiens (strain DSM 44549 / YS-314 / AJ 12310 / JCM 11189 / NBRC 100395).